The primary structure comprises 252 residues: Hydroxyacylglutathione hydrolase (252 aa).

7 residues coordinate Zn(2+): His-54, His-56, Asp-58, His-59, His-111, Asp-128, and His-166.

This sequence belongs to the metallo-beta-lactamase superfamily. Glyoxalase II family. Monomer. Zn(2+) is required as a cofactor.

It carries out the reaction an S-(2-hydroxyacyl)glutathione + H2O = a 2-hydroxy carboxylate + glutathione + H(+). It participates in secondary metabolite metabolism; methylglyoxal degradation; (R)-lactate from methylglyoxal: step 2/2. Thiolesterase that catalyzes the hydrolysis of S-D-lactoyl-glutathione to form glutathione and D-lactic acid. In Vibrio campbellii (strain ATCC BAA-1116), this protein is Hydroxyacylglutathione hydrolase.